A 394-amino-acid polypeptide reads, in one-letter code: S-adenosylmethionine synthase 1 (394 aa).

E11 is a Mg(2+) binding site. H17 contributes to the ATP binding site. Residue E45 participates in K(+) binding. The L-methionine site is built by E58 and Q101. Residues 169–171 (DGK), 237–240 (SGRF), D248, 254–255 (RK), A271, K275, and K279 each bind ATP. D248 is an L-methionine binding site. K279 serves as a coordination point for L-methionine.

Belongs to the AdoMet synthase family. In terms of assembly, homotetramer. The cofactor is Mn(2+). Requires Mg(2+) as cofactor. It depends on Co(2+) as a cofactor. K(+) serves as cofactor.

The protein resides in the cytoplasm. It catalyses the reaction L-methionine + ATP + H2O = S-adenosyl-L-methionine + phosphate + diphosphate. It functions in the pathway amino-acid biosynthesis; S-adenosyl-L-methionine biosynthesis; S-adenosyl-L-methionine from L-methionine: step 1/1. Its function is as follows. Catalyzes the formation of S-adenosylmethionine from methionine and ATP. The reaction comprises two steps that are both catalyzed by the same enzyme: formation of S-adenosylmethionine (AdoMet) and triphosphate, and subsequent hydrolysis of the triphosphate. This chain is S-adenosylmethionine synthase 1 (SAM1), found in Hordeum vulgare (Barley).